We begin with the raw amino-acid sequence, 276 residues long: uncharacterized protein (276 aa).

The interval 1 to 70 (MSKAKSPIKS…SDDDEEDSPN (70 aa)) is disordered. Positions 21–35 (VLREKKVKDAEKAEH) are enriched in basic and acidic residues. The RRM domain occupies 105-183 (GVLYVGRLPH…KLLQCKVIPE (79 aa)). A disordered region spans residues 249-276 (VSHPKAASPVASKKSSKKKNKKVLAAHK). Positions 252-261 (PKAASPVASK) are enriched in low complexity. Residues 262–276 (KSSKKKNKKVLAAHK) show a composition bias toward basic residues.

Its subcellular location is the nucleus. The protein localises to the nucleolus. This is an uncharacterized protein from Schizosaccharomyces pombe (strain 972 / ATCC 24843) (Fission yeast).